A 283-amino-acid polypeptide reads, in one-letter code: Bis(5'-nucleosyl)-tetraphosphatase, symmetrical (283 aa).

This sequence belongs to the Ap4A hydrolase family.

It carries out the reaction P(1),P(4)-bis(5'-adenosyl) tetraphosphate + H2O = 2 ADP + 2 H(+). Hydrolyzes diadenosine 5',5'''-P1,P4-tetraphosphate to yield ADP. This chain is Bis(5'-nucleosyl)-tetraphosphatase, symmetrical, found in Cronobacter sakazakii (strain ATCC BAA-894) (Enterobacter sakazakii).